The following is a 206-amino-acid chain: Uracil phosphoribosyltransferase (206 aa).

Residues Arg-76, Arg-101, and 128-136 (DPMLATGGS) contribute to the 5-phospho-alpha-D-ribose 1-diphosphate site. Residues Ile-191 and 196 to 198 (GDA) contribute to the uracil site. 5-phospho-alpha-D-ribose 1-diphosphate is bound at residue Asp-197.

It belongs to the UPRTase family. Requires Mg(2+) as cofactor.

The catalysed reaction is UMP + diphosphate = 5-phospho-alpha-D-ribose 1-diphosphate + uracil. It functions in the pathway pyrimidine metabolism; UMP biosynthesis via salvage pathway; UMP from uracil: step 1/1. Its activity is regulated as follows. Allosterically activated by GTP. In terms of biological role, catalyzes the conversion of uracil and 5-phospho-alpha-D-ribose 1-diphosphate (PRPP) to UMP and diphosphate. The chain is Uracil phosphoribosyltransferase from Malacoplasma penetrans (strain HF-2) (Mycoplasma penetrans).